Consider the following 310-residue polypeptide: Methionyl-tRNA formyltransferase (310 aa).

110–113 (SLLP) is a binding site for (6S)-5,6,7,8-tetrahydrofolate.

It belongs to the Fmt family.

It catalyses the reaction L-methionyl-tRNA(fMet) + (6R)-10-formyltetrahydrofolate = N-formyl-L-methionyl-tRNA(fMet) + (6S)-5,6,7,8-tetrahydrofolate + H(+). Functionally, attaches a formyl group to the free amino group of methionyl-tRNA(fMet). The formyl group appears to play a dual role in the initiator identity of N-formylmethionyl-tRNA by promoting its recognition by IF2 and preventing the misappropriation of this tRNA by the elongation apparatus. In Streptomyces coelicolor (strain ATCC BAA-471 / A3(2) / M145), this protein is Methionyl-tRNA formyltransferase.